A 131-amino-acid polypeptide reads, in one-letter code: Small ribosomal subunit protein uS11 (131 aa).

It belongs to the universal ribosomal protein uS11 family. In terms of assembly, part of the 30S ribosomal subunit. Interacts with proteins S7 and S18. Binds to IF-3.

Its function is as follows. Located on the platform of the 30S subunit, it bridges several disparate RNA helices of the 16S rRNA. Forms part of the Shine-Dalgarno cleft in the 70S ribosome. The chain is Small ribosomal subunit protein uS11 from Bacillus licheniformis (strain ATCC 14580 / DSM 13 / JCM 2505 / CCUG 7422 / NBRC 12200 / NCIMB 9375 / NCTC 10341 / NRRL NRS-1264 / Gibson 46).